Consider the following 633-residue polypeptide: NBPF family member NBPF3 (633 aa).

A disordered region spans residues 15 to 52; that stretch reads RGPDVETSPFGAPRAASHGVGRHQELRDPTVPGPTSSA. Residues 127–186 adopt a coiled-coil conformation; sequence LRDERLLTEEKLAEELGQAEELRQYKVLVHSQERELTQLREKLQEGRDASRSLNQHLQAL. Olduvai domains lie at 221-313, 314-402, 405-460, 461-552, and 555-633; these read ENDD…CIIP, ENES…ATSP, SREL…LDLD, RMKK…PPCP, and NEVL…IFPH. Residues 316-326 are compositionally biased toward basic and acidic residues; the sequence is ESDHEQEEEKG. A disordered region spans residues 316–370; it reads ESDHEQEEEKGPVSPRNLQESEEEEAPQESWDEGDWTLSIPPDMSASYQSDRSTF. The segment covering 335–350 has biased composition (acidic residues); the sequence is ESEEEEAPQESWDEGD. The interval 463–484 is disordered; that stretch reads KKDQEEEEDQGPPCPRLSRELP.

It belongs to the NBPF family. In terms of tissue distribution, expressed in testis and fetal heart, as well as in non small cell lung carcinoma and neuroblastoma cell line.

The protein localises to the cytoplasm. The sequence is that of NBPF family member NBPF3 from Homo sapiens (Human).